The primary structure comprises 1196 residues: Protein BRASSINOSTEROID INSENSITIVE 1 (1196 aa).

The first 23 residues, 1-23, serve as a signal peptide directing secretion; that stretch reads MKTFSSFFLSVTTLFFFSFFSLS. The Cys pair 1 motif lies at 62–69; that stretch reads CTFDGVTC. LRR repeat units follow at residues 71 to 98, 99 to 121, 122 to 146, 148 to 169, 172 to 197, 199 to 221, 222 to 244, 245 to 268, 269 to 290, 291 to 314, 316 to 338, 339 to 363, 364 to 388, 390 to 413, 415 to 439, 441 to 463, 464 to 487, 488 to 511, 513 to 535, 536 to 559, and 561 to 583; these read DDKV…LLSL, TGLE…FKCS, ASLT…SLGS, SGLK…VSGG, LNSL…VLSD, CGEL…VSRC, VNLE…LGDC, SALQ…ISTC, TELK…PLPL, KSLQ…LSGA, DTLT…FFGS, CSLL…TLLK, MRGL…LTNL, ASLL…LCQN, KNTL…LSNC, ELVS…LGSL, SKLR…LMYV, KTLE…LSNC, NLNW…IGRL, ENLA…LGDC, and SLIW…MFKQ. An N-linked (GlcNAc...) asparagine glycan is attached at Asn-112. An N-linked (GlcNAc...) asparagine glycan is attached at Asn-154. Asn-233 carries an N-linked (GlcNAc...) asparagine glycan. The N-linked (GlcNAc...) asparagine glycan is linked to Asn-275. N-linked (GlcNAc...) asparagine glycosylation is found at Asn-351, Asn-387, Asn-401, and Asn-438. An N-linked (GlcNAc...) asparagine glycan is attached at Asn-510. N-linked (GlcNAc...) asparagine glycosylation is found at Asn-545 and Asn-573. Residue Tyr-597 coordinates brassinolide. Asn-636 carries an N-linked (GlcNAc...) asparagine glycan. Residues 640 to 642 form an SERK1 binding region; that stretch reads RVY. Brassinolide contacts are provided by Tyr-642 and Ser-647. Asn-653 is a glycosylation site (N-linked (GlcNAc...) asparagine). LRR repeat units follow at residues 653–677, 678–701, 702–725, and 727–750; these read NGSM…IGSM, PYLF…VGDL, RGLN…MSAL, and MLTE…QFET. A brassinolide-binding site is contributed by Asn-705. Residues 726–729 form an SERK1 binding region; the sequence is TMLT. Asn-737 carries an N-linked (GlcNAc...) asparagine glycan. An SERK1 binding region spans residues 746–750; it reads GQFET. The Cys pair 2 motif lies at 763–770; sequence CGYPLPRC. Residues 793–813 traverse the membrane as a helical segment; it reads AGSVAMGLLFSFVCIFGLILV. The residue at position 831 (Tyr-831) is a Phosphotyrosine. Residue Ser-838 is modified to Phosphoserine. Phosphothreonine occurs at positions 842, 846, and 851. Ser-858 bears the Phosphoserine mark. A phosphothreonine mark is found at Thr-872 and Thr-880. Residues 883–1158 form the Protein kinase domain; sequence FHNDSLIGSG…VQVMAMFKEI (276 aa). Phosphoserine is present on residues Ser-887 and Ser-891. Residues 889–897 and Lys-911 contribute to the ATP site; that span reads IGSGGFGDV. Tyr-956 carries the phosphotyrosine modification. ATP contacts are provided by residues 957–959 and 963–966; these read EFM and SLED. Ser-981 bears the Phosphoserine mark. At Thr-982 the chain carries Phosphothreonine. Asp-1009 (proton acceptor) is an active-site residue. ATP-binding positions include 1009-1014 and Asp-1027; that span reads DMKSSN. The residue at position 1035 (Ser-1035) is a Phosphoserine. At Thr-1039 the chain carries Phosphothreonine. Phosphoserine is present on residues Ser-1042 and Ser-1044. 2 positions are modified to phosphothreonine: Thr-1045 and Thr-1049. Tyr-1052 is modified (phosphotyrosine). Ser-1060 is modified (phosphoserine). Position 1072 is a phosphotyrosine (Tyr-1072). Ser-1166 and Ser-1168 each carry phosphoserine. Thr-1169 bears the Phosphothreonine mark. Phosphoserine occurs at positions 1172 and 1179. Residue Thr-1180 is modified to Phosphothreonine. At Ser-1187 the chain carries Phosphoserine.

Belongs to the protein kinase superfamily. Ser/Thr protein kinase family. Monomer or homodimer in the plasma membrane. Heterodimer with BAK1 in the endosomes. Interacts with SERK1 and TTL in a kinase-dependent manner. Bind to SERK1 in a brassinolide-dependent manner. Component of the SERK1 signaling complex, composed of KAPP, CDC48A, GRF6 or GRF7, SERK1, SERK2, SERK3/BAK1 and BRI1. Interacts with CDG1. No interactions with PSKR1 or CNGC17. Interacts with BIK1. Interacts with B'ALPHA, B'BETA, B'GAMMA and B'ETA. Interacts with BSK1 and BSK3. Interacts with BSK5, BSK6 and BSK11. Autophosphorylated on Tyr-831, Tyr-956 and maybe Tyr-1072. Phosphorylated on at least 12 sites, with a preference for Ser residues. Transphosphorylated on Ser-887 by SERK1 and on Ser-838, Thr-846, Ser-858 and Ser-1166 by BAK1. Phosphorylation on Ser-1166 enhances the kinase activity. Post-translationally, glycosylated. In terms of tissue distribution, expressed ubiquitously.

It is found in the cell membrane. The protein resides in the endosome membrane. The catalysed reaction is L-seryl-[protein] + ATP = O-phospho-L-seryl-[protein] + ADP + H(+). The enzyme catalyses L-threonyl-[protein] + ATP = O-phospho-L-threonyl-[protein] + ADP + H(+). It carries out the reaction L-tyrosyl-[protein] + ATP = O-phospho-L-tyrosyl-[protein] + ADP + H(+). With respect to regulation, activated by Ser and Thr phosphorylation. Functionally, receptor with a dual specificity kinase activity acting on both serine/threonine- and tyrosine-containing substrates. Regulates, in response to brassinosteroid binding, a signaling cascade involved in plant development, including expression of light- and stress-regulated genes, promotion of cell elongation, normal leaf and chloroplast senescence, and flowering. Binds brassinolide (BL), and less effectively castasterone (CS), but not 2,3,22,23-O-tetramethylbrassinolide or ecdysone. May be involved in a feedback regulation of brassinosteroid biosynthesis. Phosphorylates BRI1-associated receptor kinase 1 (BAK1), Transthyretin-Like protein (TTL) and SERK1 on 'Ser-299' and 'Thr-462' in vitro. May have a guanylyl cyclase activity. Phosphorylates BSK1, BSK2 and BSK3 in vitro. Phosphorylates BSK1, BSK3, BSK5, BSK6, BSK8 and BSK11 in vitro. The protein is Protein BRASSINOSTEROID INSENSITIVE 1 of Arabidopsis thaliana (Mouse-ear cress).